The primary structure comprises 460 residues: UDP-glycosyltransferase 91C1 (460 aa).

UDP-alpha-D-glucose contacts are provided by residues Thr283, 335-337 (VPQ), 352-360 (HCGWNSVVE), and 374-377 (LNEQ).

This sequence belongs to the UDP-glycosyltransferase family.

This chain is UDP-glycosyltransferase 91C1 (UGT91C1), found in Arabidopsis thaliana (Mouse-ear cress).